We begin with the raw amino-acid sequence, 160 residues long: Cytochrome b6-f complex subunit 4 (160 aa).

Helical transmembrane passes span 36-56 (LLYV…ALAV), 95-115 (LLGV…PFIE), and 131-151 (TVFL…ALPL).

It belongs to the cytochrome b family. PetD subfamily. The 4 large subunits of the cytochrome b6-f complex are cytochrome b6, subunit IV (17 kDa polypeptide, PetD), cytochrome f and the Rieske protein, while the 4 small subunits are PetG, PetL, PetM and PetN. The complex functions as a dimer.

It localises to the cellular thylakoid membrane. Its function is as follows. Component of the cytochrome b6-f complex, which mediates electron transfer between photosystem II (PSII) and photosystem I (PSI), cyclic electron flow around PSI, and state transitions. The sequence is that of Cytochrome b6-f complex subunit 4 from Nostoc punctiforme (strain ATCC 29133 / PCC 73102).